The following is a 384-amino-acid chain: Substance-K receptor (384 aa).

The Extracellular portion of the chain corresponds to 1-32; the sequence is MGACVVMTDINISSGLDSNATGITAFSMPGWQ. Residues Asn-11 and Asn-19 are each glycosylated (N-linked (GlcNAc...) asparagine). The chain crosses the membrane as a helical span at residues 33-56; the sequence is LALWTAAYLALVLVAVMGNATVIW. The Cytoplasmic portion of the chain corresponds to 57 to 69; it reads IILAHQRMRTVTN. Residues 70–90 form a helical membrane-spanning segment; it reads YFIVNLALADLCMAAFNAAFN. The Extracellular portion of the chain corresponds to 91–107; sequence FVYASHNIWYFGRAFCY. Cys-106 and Cys-181 form a disulfide bridge. Residues 108–129 traverse the membrane as a helical segment; the sequence is FQNLFPITAMFVSIYSMTAIAA. The Cytoplasmic portion of the chain corresponds to 130 to 149; that stretch reads DRYMAIVHPFQPRLSAPGTR. The helical transmembrane segment at 150 to 170 threads the bilayer; sequence AVIAGIWLVALALAFPQCFYS. Residues 171 to 196 are Extracellular-facing; that stretch reads TITTDEGATKCVVAWPEDSGGKMLLL. Residues 197–218 traverse the membrane as a helical segment; that stretch reads YHLIVIALIYFLPLVVMFVAYS. Residues 219 to 251 are Cytoplasmic-facing; the sequence is VIGLTLWRRSVPGHQAHGANLRHLQAKKKFVKT. Residues 252–272 form a helical membrane-spanning segment; that stretch reads MVLVVVTFAICWLPYHLYFIL. Residues 273–290 are Extracellular-facing; the sequence is GTFQEDIYCHKFIQQVYL. A helical membrane pass occupies residues 291 to 310; the sequence is ALFWLAMSSTMYNPIIYCCL. Residues 311-384 are Cytoplasmic-facing; that stretch reads NHRFRSGFRL…SPQAGVSTEP (74 aa). A lipid anchor (S-palmitoyl cysteine) is attached at Cys-324.

Belongs to the G-protein coupled receptor 1 family.

The protein localises to the cell membrane. Its function is as follows. This is a receptor for the tachykinin neuropeptide substance K (neurokinin A). It is associated with G proteins that activate a phosphatidylinositol-calcium second messenger system. The rank order of affinity of this receptor to tachykinins is: substance K &gt; neuromedin-K &gt; substance P. This is Substance-K receptor (TACR2) from Bos taurus (Bovine).